Consider the following 346-residue polypeptide: Nicotinate-nucleotide--dimethylbenzimidazole phosphoribosyltransferase (346 aa).

Glutamate 312 acts as the Proton acceptor in catalysis.

Belongs to the CobT family.

It carries out the reaction 5,6-dimethylbenzimidazole + nicotinate beta-D-ribonucleotide = alpha-ribazole 5'-phosphate + nicotinate + H(+). Its pathway is nucleoside biosynthesis; alpha-ribazole biosynthesis; alpha-ribazole from 5,6-dimethylbenzimidazole: step 1/2. Its function is as follows. Catalyzes the synthesis of alpha-ribazole-5'-phosphate from nicotinate mononucleotide (NAMN) and 5,6-dimethylbenzimidazole (DMB). The chain is Nicotinate-nucleotide--dimethylbenzimidazole phosphoribosyltransferase from Cupriavidus necator (strain ATCC 17699 / DSM 428 / KCTC 22496 / NCIMB 10442 / H16 / Stanier 337) (Ralstonia eutropha).